Consider the following 288-residue polypeptide: Bifunctional protein FolD (288 aa).

NADP(+) contacts are provided by residues 166-168 and Ile-232; that span reads GAS.

The protein belongs to the tetrahydrofolate dehydrogenase/cyclohydrolase family. Homodimer.

The enzyme catalyses (6R)-5,10-methylene-5,6,7,8-tetrahydrofolate + NADP(+) = (6R)-5,10-methenyltetrahydrofolate + NADPH. It carries out the reaction (6R)-5,10-methenyltetrahydrofolate + H2O = (6R)-10-formyltetrahydrofolate + H(+). The protein operates within one-carbon metabolism; tetrahydrofolate interconversion. Catalyzes the oxidation of 5,10-methylenetetrahydrofolate to 5,10-methenyltetrahydrofolate and then the hydrolysis of 5,10-methenyltetrahydrofolate to 10-formyltetrahydrofolate. The polypeptide is Bifunctional protein FolD (Acidithiobacillus ferrooxidans (strain ATCC 23270 / DSM 14882 / CIP 104768 / NCIMB 8455) (Ferrobacillus ferrooxidans (strain ATCC 23270))).